Here is a 360-residue protein sequence, read N- to C-terminus: Photosystem II protein D1 (360 aa).

A run of 3 helical transmembrane segments spans residues 29–46 (YIGW…TATS), 118–133 (HFLL…EWEL), and 142–156 (WISV…AAAA). His118 serves as a coordination point for chlorophyll a. Position 126 (Tyr126) interacts with pheophytin a. [CaMn4O5] cluster-binding residues include Asp170 and Glu189. Residues 197 to 218 (FHQLGVAGVFGGSLFSAMHGSL) traverse the membrane as a helical segment. Chlorophyll a is bound at residue His198. Residues His215 and 264–265 (SF) each bind a quinone. His215 contacts Fe cation. His272 serves as a coordination point for Fe cation. A helical transmembrane segment spans residues 274-288 (FLGLWPVVGIWFTAM). Positions 332, 333, 342, and 344 each coordinate [CaMn4O5] cluster. The propeptide occupies 345–360 (SSNSLPVSLVAPSVNG).

Belongs to the reaction center PufL/M/PsbA/D family. In terms of assembly, PSII is composed of 1 copy each of membrane proteins PsbA, PsbB, PsbC, PsbD, PsbE, PsbF, PsbH, PsbI, PsbJ, PsbK, PsbL, PsbM, PsbT, PsbX, PsbY, PsbZ, Psb30/Ycf12, at least 3 peripheral proteins of the oxygen-evolving complex and a large number of cofactors. It forms dimeric complexes. The D1/D2 heterodimer binds P680, chlorophylls that are the primary electron donor of PSII, and subsequent electron acceptors. It shares a non-heme iron and each subunit binds pheophytin, quinone, additional chlorophylls, carotenoids and lipids. D1 provides most of the ligands for the Mn4-Ca-O5 cluster of the oxygen-evolving complex (OEC). There is also a Cl(-1) ion associated with D1 and D2, which is required for oxygen evolution. The PSII complex binds additional chlorophylls, carotenoids and specific lipids. serves as cofactor. Post-translationally, tyr-161 forms a radical intermediate that is referred to as redox-active TyrZ, YZ or Y-Z. In terms of processing, C-terminally processed by CTPA; processing is essential to allow assembly of the oxygen-evolving complex and thus photosynthetic growth.

Its subcellular location is the plastid. It localises to the chloroplast thylakoid membrane. The catalysed reaction is 2 a plastoquinone + 4 hnu + 2 H2O = 2 a plastoquinol + O2. Its function is as follows. Photosystem II (PSII) is a light-driven water:plastoquinone oxidoreductase that uses light energy to abstract electrons from H(2)O, generating O(2) and a proton gradient subsequently used for ATP formation. It consists of a core antenna complex that captures photons, and an electron transfer chain that converts photonic excitation into a charge separation. The D1/D2 (PsbA/PsbD) reaction center heterodimer binds P680, the primary electron donor of PSII as well as several subsequent electron acceptors. The sequence is that of Photosystem II protein D1 from Gracilaria tenuistipitata var. liui (Red alga).